The primary structure comprises 306 residues: Elongation factor Ts (306 aa).

Residues 80-83 are involved in Mg(2+) ion dislocation from EF-Tu; sequence TDFV.

The protein belongs to the EF-Ts family.

It localises to the cytoplasm. In terms of biological role, associates with the EF-Tu.GDP complex and induces the exchange of GDP to GTP. It remains bound to the aminoacyl-tRNA.EF-Tu.GTP complex up to the GTP hydrolysis stage on the ribosome. In Methylorubrum populi (strain ATCC BAA-705 / NCIMB 13946 / BJ001) (Methylobacterium populi), this protein is Elongation factor Ts.